We begin with the raw amino-acid sequence, 520 residues long: EGF domain-specific O-linked N-acetylglucosamine transferase (520 aa).

The signal sequence occupies residues 1–16 (MPILPILIGILHLSLA). Asn-52, Asn-176, and Asn-250 each carry an N-linked (GlcNAc...) asparagine glycan. Positions 292–294 (DVE) match the Required for optimal activity motif. N-linked (GlcNAc...) asparagine glycosylation occurs at Asn-479. The short motif at 517–520 (RNEL) is the Prevents secretion from ER element.

A divalent metal cation serves as cofactor.

The protein localises to the endoplasmic reticulum lumen. It carries out the reaction L-seryl-[protein] + UDP-N-acetyl-alpha-D-glucosamine = 3-O-(N-acetyl-beta-D-glucosaminyl)-L-seryl-[protein] + UDP + H(+). It catalyses the reaction L-threonyl-[protein] + UDP-N-acetyl-alpha-D-glucosamine = 3-O-(N-acetyl-beta-D-glucosaminyl)-L-threonyl-[protein] + UDP + H(+). Functionally, catalyzes the transfer of a single N-acetylglucosamine from UDP-GlcNAc to a serine or threonine residue in extracellular proteins resulting in their modification with a beta-linked N-acetylglucosamine (O-GlcNAc). Specifically glycosylates the Thr residue located between the fifth and sixth conserved cysteines of folded EGF-like domains. Involved in epithelial cell adhesion/interaction with the extracellular matrix by mediating glycosylation of proteins in the secretory pathway, such as Dumpy (Dp). The chain is EGF domain-specific O-linked N-acetylglucosamine transferase (Eogt) from Drosophila melanogaster (Fruit fly).